We begin with the raw amino-acid sequence, 2209 residues long: Genome polyprotein (2209 aa).

Glycine 2 carries the N-myristoyl glycine; by host lipid modification. Residues glycine 2 to glutamine 1520 are Cytoplasmic-facing. Residues glycine 580–alanine 600 are amphipathic alpha-helix. Residues alanine 599–glutamate 619 form a disordered region. Catalysis depends on for protease 2A activity residues histidine 901 and aspartate 919. 2 residues coordinate Zn(2+): cysteine 936 and cysteine 938. The active-site For protease 2A activity is the cysteine 990. Zn(2+) is bound by residues cysteine 996 and histidine 998. A membrane-binding region spans residues glycine 1128 to glutamine 1200. An oligomerization region spans residues glycine 1128–threonine 1266. Positions serine 1149–serine 1153 are RNA-binding. Residues glutamate 1232–asparagine 1388 enclose the SF3 helicase domain. Glycine 1256 to serine 1263 contributes to the ATP binding site. The Zn(2+) site is built by cysteine 1396, cysteine 1399, cysteine 1408, and cysteine 1413. Residues cysteine 1396–cysteine 1413 form a C4-type zinc finger. Residues glutamate 1440 to isoleucine 1447 are RNA-binding. The segment at methionine 1451 to glutamine 1456 is oligomerization. An intramembrane segment occupies alanine 1521–tyrosine 1536. At lysine 1537 to phenylalanine 2209 the chain is on the cytoplasmic side. At tyrosine 1546 the chain carries O-(5'-phospho-RNA)-tyrosine. O-UMP-tyrosine; transient is present on tyrosine 1546. The region spanning glycine 1566–phenylalanine 1744 is the Peptidase C3 domain. Residues histidine 1605, glutamate 1636, and cysteine 1712 each act as for protease 3C activity in the active site. Residues glutamate 1975 to leucine 2090 enclose the RdRp catalytic domain. Mg(2+)-binding residues include aspartate 1981 and aspartate 2076.

It belongs to the picornaviruses polyprotein family. Interacts with capsid protein VP1 and capsid protein VP3 to form heterotrimeric protomers. As to quaternary structure, interacts with capsid protein VP0, and capsid protein VP3 to form heterotrimeric protomers. Five protomers subsequently associate to form pentamers which serve as building blocks for the capsid. Interacts with capsid protein VP2, capsid protein VP3 and capsid protein VP4 following cleavage of capsid protein VP0. Interacts with human PVR. In terms of assembly, interacts with capsid protein VP1 and capsid protein VP3 in the mature capsid. Interacts with capsid protein VP0 and capsid protein VP1 to form heterotrimeric protomers. Five protomers subsequently associate to form pentamers which serve as building blocks for the capsid. Interacts with capsid protein VP4 in the mature capsid. Interacts with protein 2C; this interaction may be important for virion morphogenesis. As to quaternary structure, interacts with capsid protein VP1 and capsid protein VP3. In terms of assembly, homodimer. Homohexamer; forms a hexameric ring structure with 6-fold symmetry characteristic of AAA+ ATPases. Interacts (via N-terminus) with host RTN3 (via reticulon domain); this interaction is important for viral replication. Interacts with capsid protein VP3; this interaction may be important for virion morphogenesis. As to quaternary structure, interacts with protein 3CD. In terms of assembly, homodimer. Interacts with host GBF1. Interacts (via GOLD domain) with host ACBD3 (via GOLD domain); this interaction allows the formation of a viral protein 3A/ACBD3 heterotetramer with a 2:2 stoichiometry, which will stimulate the recruitment of host PI4KB in order to synthesize PI4P at the viral RNA replication sites. Interacts with RNA-directed RNA polymerase. As to quaternary structure, interacts with protein 3AB and with RNA-directed RNA polymerase. In terms of assembly, interacts with Viral protein genome-linked and with protein 3CD. Mg(2+) serves as cofactor. Specific enzymatic cleavages in vivo by the viral proteases yield processing intermediates and the mature proteins. In terms of processing, myristoylation is required for the formation of pentamers during virus assembly. Further assembly of 12 pentamers and a molecule of genomic RNA generates the provirion. Post-translationally, during virion maturation, immature virions are rendered infectious following cleavage of VP0 into VP4 and VP2. This maturation seems to be an autocatalytic event triggered by the presence of RNA in the capsid and it is followed by a conformational change infectious virion. Myristoylation is required during RNA encapsidation and formation of the mature virus particle. In terms of processing, VPg is uridylylated by the polymerase into VPg-pUpU. This acts as a nucleotide-peptide primer for the genomic RNA replication.

It localises to the virion. Its subcellular location is the host cytoplasm. The protein localises to the host cytoplasmic vesicle membrane. The protein resides in the host nucleus. It carries out the reaction RNA(n) + a ribonucleoside 5'-triphosphate = RNA(n+1) + diphosphate. The enzyme catalyses Selective cleavage of Tyr-|-Gly bond in the picornavirus polyprotein.. It catalyses the reaction a ribonucleoside 5'-triphosphate + H2O = a ribonucleoside 5'-diphosphate + phosphate + H(+). The catalysed reaction is Selective cleavage of Gln-|-Gly bond in the poliovirus polyprotein. In other picornavirus reactions Glu may be substituted for Gln, and Ser or Thr for Gly.. Its activity is regulated as follows. Replication or transcription is subject to high level of random mutations by the nucleotide analog ribavirin. Its function is as follows. Forms an icosahedral capsid of pseudo T=3 symmetry with capsid proteins VP2 and VP3. The capsid is 300 Angstroms in diameter, composed of 60 copies of each capsid protein and enclosing the viral positive strand RNA genome. Capsid protein VP1 mainly forms the vertices of the capsid. Capsid protein VP1 interacts with host cell receptor PVR to provide virion attachment to target host epithelial cells. This attachment induces virion internalization predominantly through clathrin- and caveolin-independent endocytosis in Hela cells and through caveolin-mediated endocytosis in brain microvascular endothelial cells. Tyrosine kinases are probably involved in the entry process. Virus binding to PVR induces increased junctional permeability and rearrangement of junctional proteins. Modulation of endothelial tight junctions, as well as cytolytic infection of endothelial cells themselves, may result in loss of endothelial integrity which may help the virus to reach the CNS. After binding to its receptor, the capsid undergoes conformational changes. Capsid protein VP1 N-terminus (that contains an amphipathic alpha-helix) and capsid protein VP4 are externalized. Together, they shape a pore in the host membrane through which viral genome is translocated to host cell cytoplasm. Forms an icosahedral capsid of pseudo T=3 symmetry with capsid proteins VP1 and VP3. The capsid is 300 Angstroms in diameter, composed of 60 copies of each capsid protein and enclosing the viral positive strand RNA genome. In terms of biological role, forms an icosahedral capsid of pseudo T=3 symmetry with capsid proteins VP2 and VP1. The capsid is 300 Angstroms in diameter, composed of 60 copies of each capsid protein and enclosing the viral positive strand RNA genome. Functionally, lies on the inner surface of the capsid shell. After binding to the host receptor, the capsid undergoes conformational changes. Capsid protein VP4 is released, Capsid protein VP1 N-terminus is externalized, and together, they shape a pore in the host membrane through which the viral genome is translocated into the host cell cytoplasm. Its function is as follows. Component of immature procapsids, which is cleaved into capsid proteins VP4 and VP2 after maturation. Allows the capsid to remain inactive before the maturation step. Cysteine protease that cleaves viral polyprotein and specific host proteins. It is responsible for the autocatalytic cleavage between the P1 and P2 regions, which is the first cleavage occurring in the polyprotein. Also cleaves the host translation initiation factor EIF4G1, in order to shut down the capped cellular mRNA translation. Inhibits the host nucleus-cytoplasm protein and RNA trafficking by cleaving host members of the nuclear pores including NUP98, NUP62 and NUP153. Counteracts stress granule formation probably by antagonizing its assembly or promoting its dissassembly. Cleaves and inhibits host IFIH1/MDA5, thereby inhibiting the type-I IFN production and the establishment of the antiviral state. Cleaves and inhibits host MAVS, thereby inhibiting the type-I IFN production and the establishment of the antiviral state. In terms of biological role, plays an essential role in the virus replication cycle by acting as a viroporin. Creates a pore in the host endoplasmic reticulum and as a consequence releases Ca2+ in the cytoplasm of infected cell. In turn, high levels of cytoplasmic calcium may trigger membrane trafficking and transport of viral ER-associated proteins to viroplasms, sites of viral genome replication. Functionally, induces and associates with structural rearrangements of intracellular membranes. Displays RNA-binding, nucleotide binding and NTPase activities. May play a role in virion morphogenesis and viral RNA encapsidation by interacting with the capsid protein VP3. Its function is as follows. Localizes the viral replication complex to the surface of membranous vesicles. Together with protein 3CD binds the Cis-Active RNA Element (CRE) which is involved in RNA synthesis initiation. Acts as a cofactor to stimulate the activity of 3D polymerase, maybe through a nucleid acid chaperone activity. Localizes the viral replication complex to the surface of membranous vesicles. It inhibits host cell endoplasmic reticulum-to-Golgi apparatus transport and causes the disassembly of the Golgi complex, possibly through GBF1 interaction. This would result in depletion of MHC, trail receptors and IFN receptors at the host cell surface. Plays an essential role in viral RNA replication by recruiting ACBD3 and PI4KB at the viral replication sites, thereby allowing the formation of the rearranged membranous structures where viral replication takes place. In terms of biological role, acts as a primer for viral RNA replication and remains covalently bound to viral genomic RNA. VPg is uridylylated prior to priming replication into VPg-pUpU. The oriI viral genomic sequence may act as a template for this. The VPg-pUpU is then used as primer on the genomic RNA poly(A) by the RNA-dependent RNA polymerase to replicate the viral genome. During genome replication, the VPg-RNA linkage is removed by the host TDP2, thereby accelerating replication. During the late stage of the replication cycle, host TDP2 is excluded from sites of viral RNA synthesis and encapsidation, allowing for the generation of progeny virions. Functionally, involved in the viral replication complex and viral polypeptide maturation. It exhibits protease activity with a specificity and catalytic efficiency that is different from protease 3C. Protein 3CD binds to the 5'UTR of the viral genome. Its function is as follows. Major viral protease that mediates proteolytic processing of the polyprotein. Cleaves host EIF5B, contributing to host translation shutoff. Cleaves also host PABPC1, contributing to host translation shutoff. Cleaves host RIGI and thus contributes to the inhibition of type I interferon production. Cleaves host NLRP1, triggers host N-glycine-mediated degradation of the autoinhibitory NLRP1 N-terminal fragment. Inhibits the integrated stress response (ISR) in the infected cell by cleaving host G3BP1. Stress granule formation is thus inhibited, which allows protein synthesis and viral replication. Replicates the viral genomic RNA on the surface of intracellular membranes. May form linear arrays of subunits that propagate along a strong head-to-tail interaction called interface-I. Covalently attaches UMP to a tyrosine of VPg, which is used to prime RNA synthesis. The positive stranded RNA genome is first replicated at virus induced membranous vesicles, creating a dsRNA genomic replication form. This dsRNA is then used as template to synthesize positive stranded RNA genomes. ss(+)RNA genomes are either translated, replicated or encapsidated. The chain is Genome polyprotein from Homo sapiens (Human).